Consider the following 188-residue polypeptide: Viral FLICE protein (188 aa).

DED domains are found at residues 2–74 and 93–169; these read ATYE…DLLH and PYQL…QVQT.

In terms of assembly, interacts with host RIPK1, TRAF2, MAP3K14, IKBKB, and IKBKG. Interacts with host CADM1; this interaction is essential for chronic NF-kappa-B activation.

Plays a role in the modulation of host signaling pathways by acting as an activator of both the classic and the alternative NF-kappa-B pathways. Thereby, initiates an important range of cellular processes to promote cell survival, proliferation and protection from apoptosis. This is Viral FLICE protein (ORF71) from Human herpesvirus 8 type P (isolate GK18) (HHV-8).